We begin with the raw amino-acid sequence, 121 residues long: uncharacterized protein (121 aa).

The chain crosses the membrane as a helical span at residues 65-84; the sequence is TILFYTPTLICFLFLQNFLY.

The protein localises to the membrane. This is an uncharacterized protein from Saccharomyces cerevisiae (strain ATCC 204508 / S288c) (Baker's yeast).